The sequence spans 534 residues: MASRDLPHSLNDLAFGWIKHLKEEIIINKNSQQLVDEDFQPDEDVTKETKVKLNNLWPAFASGAGLFADGYVNNSIGIVMACLKILYGDEFTKSNAISNIGSIGFVGTVVGQLSFGYISDRVARKGGMMTANIMLIAFTLLCAVGSWGTTIQGFFACLTVWRFCLGVAIGAEYPTSSVIASEFANQLPAGKRNRYFIWFTGFMIDFGFVVSAFVPFVLLWIFTEKHLRALWRVSIGLGAILPTALFFIRLKMKDSTSFEKLHMKNVRYRDYPWWLIVKFYWFRLTIVSMIWFIYNFSVYSFGTFNAIILGQIIPDAPLWQQWGWSVVFNLFYIPGSFLGAFSADYLGPRLTLAIGVGLQGIIGFIMSACLNGLRKQVAAFTVVFGIFATLGEFGPGGNIGLLASKTSATPIRGQYYGIAAAMGKIGAFVGTWIFPAIQRRYASKTNPDLELQVPFYLSSGLCIFSALLTFFLCPHVGQDAINREDKEFVEYLRKNGFDVSKLGEDSSSVDVDVVKDTDSAEKISETIEVGQKLA.

Helical transmembrane passes span 63–83 (GAGLFADGYVNNSIGIVMACL), 96–116 (AISNIGSIGFVGTVVGQLSFG), 135–155 (LIAFTLLCAVGSWGTTIQGFF), 163–183 (FCLGVAIGAEYPTSSVIASEF), 202–222 (FMIDFGFVVSAFVPFVLLWIF), 230–250 (LWRVSIGLGAILPTALFFIRL), 289–309 (MIWFIYNFSVYSFGTFNAIIL), 322–342 (WGWSVVFNLFYIPGSFLGAFS), 350–370 (LTLAIGVGLQGIIGFIMSACL), 377–397 (VAAFTVVFGIFATLGEFGPGG), 417–437 (GIAAAMGKIGAFVGTWIFPAI), and 453–473 (VPFYLSSGLCIFSALLTFFLC).

The protein belongs to the major facilitator superfamily. Sugar transporter (TC 2.A.1.1) family.

The protein resides in the cell membrane. In terms of biological role, probable glycerophosphodiester transporter. Does not possess detectable glycerophosphoinositol (GroPIns) transport activity. Might be involved in the uptake of glycerophosphocholine (GroPCho). The expanded ability to utilize GroPIns and GroPCho results from the organism's pathogenic nature and its need to occupy a variety of environments within its host organism. This possibility is buttressed by the fact that GroPIns and GroPCho are present and abundant in human fluids. This is Glycerophosphodiester transporter GIT2 from Candida albicans (strain SC5314 / ATCC MYA-2876) (Yeast).